Reading from the N-terminus, the 895-residue chain is Histone-lysine N-methyltransferase EZ3 (895 aa).

Residues 1-13 show a composition bias toward low complexity; that stretch reads MASSSKASDSSSQ. Disordered regions lie at residues 1–30 and 396–446; these read MASS…APAS and SSVS…PGKR. Residues 396-422 are compositionally biased toward polar residues; it reads SSVSAEESTTPPSADTSETENASSDMP. The segment covering 427–436 has biased composition (basic residues); it reads RKYKISKRGP. In terms of domain architecture, SANT spans 528 to 578; that stretch reads TLSCWSALERDLYLKGIEIFGKNSCLIARNLLSGMKTCMEVANYMYNNGAA. One can recognise a CXC domain in the interval 628-732; that stretch reads AGHPTVRKRI…SLGEPPARGD (105 aa). Positions 747–862 constitute an SET domain; it reads QRILLGRSDV…ASEELFYDYR (116 aa). Positions 870–895 are disordered; sequence AWARRPEGSKKDEASVSHHRAHKVAR. The span at 873–885 shows a compositional bias: basic and acidic residues; that stretch reads RRPEGSKKDEASV. Positions 886-895 are enriched in basic residues; the sequence is SHHRAHKVAR.

It belongs to the class V-like SAM-binding methyltransferase superfamily. Histone-lysine methyltransferase family. EZ subfamily. As to expression, widely expressed.

The protein localises to the nucleus. The enzyme catalyses L-lysyl(27)-[histone H3] + 3 S-adenosyl-L-methionine = N(6),N(6),N(6)-trimethyl-L-lysyl(27)-[histone H3] + 3 S-adenosyl-L-homocysteine + 3 H(+). Its function is as follows. Polycomb group (PcG) protein. Catalytic subunit of some PcG multiprotein complex, which methylates 'Lys-27' of histone H3, leading to transcriptional repression of the affected target genes. PcG proteins are not required to initiate repression, but to maintain it during later stages of development. The chain is Histone-lysine N-methyltransferase EZ3 (EZ3) from Zea mays (Maize).